Reading from the N-terminus, the 466-residue chain is MSLSLWQQCLARLQDELPATEFSMWIRPLQAELRDNTLALYAPNRFVLDWVRDKYLNNINGLLNTFCGADAPQLRFEVGTKPVTQTLKTPVHNVVAPTQTTTAQPQRVAPAARSGWDNVPAPAEPTYRSNVNVKHTFDNFVEGKSNQLARAAARQVADNPGGAYNPLFLYGGTGLGKTHLLHAVGNGIMARKPNAKVVYMHSERFVQDMVKALQNNAIEEFKRYYRSVDALLIDDIQFFANKERSQEEFFHTFNALLEGNQQIILTSDRYPKEINGVEDRLKSRFGWGLTVAIEPPELETRVAILMKKADENDIRLPGEVAFFIAKRLRSNVRELEGALNRVIANANFTGRAITIDFVREALRDLLALQEKLVTIDNIQKTVAEYYKIKIADLLSKRRSRSVARPRQMAMALAKELTNHSLPEIGDAFGGRDHTTVLHACRKIEQLREESHDIKEDFSNLIRTLSS.

Positions 1–86 are domain I, interacts with DnaA modulators; it reads MSLSLWQQCL…EVGTKPVTQT (86 aa). Positions 86–129 are domain II; it reads TLKTPVHNVVAPTQTTTAQPQRVAPAARSGWDNVPAPAEPTYRS. Residues 130-346 are domain III, AAA+ region; sequence NVNVKHTFDN…GALNRVIANA (217 aa). ATP contacts are provided by Gly-174, Gly-176, Lys-177, and Thr-178. Residues 347-466 are domain IV, binds dsDNA; sequence NFTGRAITID…FSNLIRTLSS (120 aa).

Belongs to the DnaA family. Oligomerizes as a right-handed, spiral filament on DNA at oriC.

The protein localises to the cytoplasm. Its function is as follows. Plays an essential role in the initiation and regulation of chromosomal replication. ATP-DnaA binds to the origin of replication (oriC) to initiate formation of the DNA replication initiation complex once per cell cycle. Binds the DnaA box (a 9 base pair repeat at the origin) and separates the double-stranded (ds)DNA. Forms a right-handed helical filament on oriC DNA; dsDNA binds to the exterior of the filament while single-stranded (ss)DNA is stabiized in the filament's interior. The ATP-DnaA-oriC complex binds and stabilizes one strand of the AT-rich DNA unwinding element (DUE), permitting loading of DNA polymerase. After initiation quickly degrades to an ADP-DnaA complex that is not apt for DNA replication. Binds acidic phospholipids. The polypeptide is Chromosomal replication initiator protein DnaA (Salmonella gallinarum (strain 287/91 / NCTC 13346)).